Consider the following 968-residue polypeptide: Breast cancer anti-estrogen resistance protein 1 (968 aa).

Methionine 1 carries the N-acetylmethionine modification. In terms of domain architecture, SH3 spans aspartate 97–glycine 159. Positions lysine 164–tyrosine 277 are disordered. The segment covering alanine 167–serine 182 has biased composition (pro residues). The segment at tyrosine 213–alanine 514 is substrate for kinases. Residue tyrosine 226 is modified to Phosphotyrosine; by SRC. The span at proline 233 to glutamine 249 shows a compositional bias: polar residues. A Phosphoserine modification is found at serine 237. The residue at position 332 (tyrosine 332) is a Phosphotyrosine. Tyrosine 347 carries the post-translational modification Phosphotyrosine; by ABL1. Residue threonine 367 is modified to Phosphothreonine. At serine 390 the chain carries Phosphoserine. A disordered region spans residues lysine 393 to aspartate 416. Tyrosine 460, tyrosine 470, and tyrosine 508 each carry phosphotyrosine. 2 disordered regions span residues isoleucine 503–valine 544 and arginine 705–glycine 756. Residues alanine 514–arginine 524 show a composition bias toward basic and acidic residues. The segment covering leucine 525–leucine 542 has biased composition (low complexity). A phosphoserine mark is found at serine 526, serine 535, and serine 737. Polar residues predominate over residues glycine 715 to asparagine 753. Residues arginine 733–phenylalanine 741 carry the SH3-binding motif. A divergent helix-loop-helix motif region spans residues phenylalanine 844–glycine 894.

The protein belongs to the CAS family. Forms complexes in vivo with PTK2/FAK1, adapter protein CRKL and LYN kinase. Can heterodimerize with NEDD9. Component of a complex comprised of SH2D3C, BCAR1/CAS, and CRK. Within the complex, interacts with SH2D3C (via C-terminus), and CRK. Part of a complex comprised of PTPRA, BCAR1, BCAR3 (via SH2 domain) and SRC; the formation of the complex is dependent on integrin mediated-tyrosine phosphorylation of PTPRA. Interacts with BCAR3 (via Ras-GEF domain); the interaction regulates adhesion-dependent serine phosphorylation. Interacts with SMAD2 and SMAD3. Interacts with NPHP1. Interacts with PTK2B/PYK2. Interacts (via C-terminus) with SH2D3C/CHAT isoform 2 (via C-terminus). Interacts with activated CSPG4. Interacts with BMX, INPPL1/SHIP2 and PEAK1. Part of a collagen stimulated complex involved in cell migration composed of CDC42, CRK, TNK2 and BCAR1/p130cas. Interacts with TNK2 via SH3 domains. Interacts with PTK2B/PYK2. Interacts (when tyrosine-phosphorylated) with tensin TNS1; the interaction is increased by phosphorylation of TNS1. PTK2/FAK1 activation mediates phosphorylation at the YDYVHL motif; phosphorylation is most likely catalyzed by SRC family members. SRC-family kinases are recruited to the phosphorylated sites and can phosphorylate other tyrosine residues. Tyrosine phosphorylation is triggered by integrin mediated adhesion of cells to the extracellular matrix. In terms of processing, phosphorylated by SRC kinase in a EDN1- and PTK2B-mediated manner; phosphorylation strengthens its interaction with BCAR3 as part of the PTK2B/BCAR1/BCAR3/RAP1 signaling pathway. Post-translationally, dephosphorylated by PTPN14 at Tyr-226. Widely expressed. Higher expression in lung, intestine and testis.

The protein resides in the cell junction. It is found in the focal adhesion. It localises to the cytoplasm. The protein localises to the cell projection. Its subcellular location is the axon. Functionally, docking protein which plays a central coordinating role for tyrosine-kinase-based signaling related to cell adhesion. Implicated in induction of cell migration and cell branching. Involved in the BCAR3-mediated inhibition of TGFB signaling. The protein is Breast cancer anti-estrogen resistance protein 1 (Bcar1) of Rattus norvegicus (Rat).